A 154-amino-acid polypeptide reads, in one-letter code: Putative pre-16S rRNA nuclease (154 aa).

Belongs to the YqgF nuclease family.

The protein localises to the cytoplasm. Its function is as follows. Could be a nuclease involved in processing of the 5'-end of pre-16S rRNA. The protein is Putative pre-16S rRNA nuclease of Rickettsia bellii (strain OSU 85-389).